We begin with the raw amino-acid sequence, 472 residues long: Proline--tRNA ligase (472 aa).

Belongs to the class-II aminoacyl-tRNA synthetase family. ProS type 3 subfamily. As to quaternary structure, homodimer.

Its subcellular location is the cytoplasm. It catalyses the reaction tRNA(Pro) + L-proline + ATP = L-prolyl-tRNA(Pro) + AMP + diphosphate. In terms of biological role, catalyzes the attachment of proline to tRNA(Pro) in a two-step reaction: proline is first activated by ATP to form Pro-AMP and then transferred to the acceptor end of tRNA(Pro). The protein is Proline--tRNA ligase of Ureaplasma parvum serovar 3 (strain ATCC 27815 / 27 / NCTC 11736).